The primary structure comprises 338 residues: MNLQKFPRYPLTFGPTPIQPLKRLSAHLGGKVELYAKRDDCNSGLAFGGNKTRKLEYLIPDALAQGCDTLVSIGGIQSNQTRQVAAVAAHLGMKCVLVQENWVNYHDAVYDRVGNIQMSRMMGADVRLVPDGFDIGFRKSWEDALADVRARGGKPYAIPAGCSDHPLGGLGFVGFAEEVRAQEAELGFQFDYVVVCSVTGSTQAGMVVGFAADGRADRVIGVDASAKPAQTREQILRIAKHTADRVELGRDITSADVVLDERFGGPEYGLPNEGTLEAIRLCAKLEGVLTDPVYEGKSMHGMIEKVRLGEFPAGSKVLYAHLGGVPALNAYSFLFRDG.

An N6-(pyridoxal phosphate)lysine modification is found at Lys51. The active-site Nucleophile is the Ser78.

This sequence belongs to the ACC deaminase/D-cysteine desulfhydrase family. As to quaternary structure, homotrimer. Pyridoxal 5'-phosphate is required as a cofactor.

The enzyme catalyses 1-aminocyclopropane-1-carboxylate + H2O = 2-oxobutanoate + NH4(+). In terms of biological role, catalyzes a cyclopropane ring-opening reaction, the irreversible conversion of 1-aminocyclopropane-1-carboxylate (ACC) to ammonia and alpha-ketobutyrate. Allows growth on ACC as a nitrogen source. The chain is 1-aminocyclopropane-1-carboxylate deaminase from Burkholderia pseudomallei (strain 1710b).